Consider the following 281-residue polypeptide: Cytochrome bc1 complex cytochrome c subunit (281 aa).

The chain crosses the membrane as a helical span at residues 17–37 (AAGAMALAVGLTGAGILVNAV). 2 consecutive Cytochrome c domains span residues 52 to 132 (ALIQ…EANG) and 162 to 240 (ADVA…KSAK). Heme c-binding residues include Cys-65, Cys-68, His-69, Cys-175, Cys-178, and His-179. Residues 259 to 279 (GMMMWLVGIVVLVAAAMWIGS) traverse the membrane as a helical segment.

In terms of assembly, the cytochrome bc1 complex is composed of a cytochrome b (QcrB), the Rieske iron-sulfur protein (QcrA) and a diheme cytochrome c (QcrC) subunit. The bc1 complex forms a supercomplex with cytochrome c oxidase (cytochrome aa3). In terms of processing, binds 2 heme c groups covalently per subunit.

The protein localises to the cell membrane. It catalyses the reaction a quinol + 2 Fe(III)-[cytochrome c](out) = a quinone + 2 Fe(II)-[cytochrome c](out) + 2 H(+)(out). In terms of biological role, cytochrome c1 subunit of the cytochrome bc1 complex, an essential component of the respiratory electron transport chain required for ATP synthesis. The bc1 complex catalyzes the oxidation of menaquinol and the reduction of cytochrome c in the respiratory chain. The bc1 complex operates through a Q-cycle mechanism that couples electron transfer to generation of the proton gradient that drives ATP synthesis. This is Cytochrome bc1 complex cytochrome c subunit (qcrC) from Corynebacterium diphtheriae (strain ATCC 700971 / NCTC 13129 / Biotype gravis).